Consider the following 285-residue polypeptide: Pantothenate synthetase (285 aa).

33–40 contributes to the ATP binding site; sequence MGALHEGH. The active-site Proton donor is His40. (R)-pantoate is bound at residue Gln64. Residue Gln64 coordinates beta-alanine. 150-153 is a binding site for ATP; sequence GEKD. Gln156 serves as a coordination point for (R)-pantoate. ATP contacts are provided by residues Ala179 and 187–190; that span reads LSSR.

This sequence belongs to the pantothenate synthetase family. In terms of assembly, homodimer.

Its subcellular location is the cytoplasm. It catalyses the reaction (R)-pantoate + beta-alanine + ATP = (R)-pantothenate + AMP + diphosphate + H(+). It functions in the pathway cofactor biosynthesis; (R)-pantothenate biosynthesis; (R)-pantothenate from (R)-pantoate and beta-alanine: step 1/1. Its function is as follows. Catalyzes the condensation of pantoate with beta-alanine in an ATP-dependent reaction via a pantoyl-adenylate intermediate. This chain is Pantothenate synthetase, found in Caulobacter vibrioides (strain ATCC 19089 / CIP 103742 / CB 15) (Caulobacter crescentus).